A 348-amino-acid polypeptide reads, in one-letter code: Flavonol synthase/flavanone 3-hydroxylase (348 aa).

In terms of domain architecture, Fe2OG dioxygenase spans 209 to 309 (EIVYLLKINY…RMSWPVFLEP (101 aa)). 3 residues coordinate Fe cation: His234, Asp236, and His290.

Belongs to the iron/ascorbate-dependent oxidoreductase family. The cofactor is L-ascorbate. Fe cation serves as cofactor.

The protein localises to the cytoplasm. It catalyses the reaction a (2R,3R)-dihydroflavonol + 2-oxoglutarate + O2 = a flavonol + succinate + CO2 + H2O. The enzyme catalyses a (2S)-flavan-4-one + 2-oxoglutarate + O2 = a (2R,3R)-dihydroflavonol + succinate + CO2. The protein operates within secondary metabolite biosynthesis; flavonoid biosynthesis. Its function is as follows. Catalyzes the formation of flavonols from dihydroflavonols. It can act on dihydrokaempferol to produce kaempferol, on dihydroquercetin to produce quercitin and on dihydromyricetin to produce myricetin. This Petunia hybrida (Petunia) protein is Flavonol synthase/flavanone 3-hydroxylase (FL).